The chain runs to 651 residues: Probable potassium transport system protein Kup (651 aa).

12 helical membrane-spanning segments follow: residues 41–61 (LVLGALGVVYGDIGTSPIYAF), 82–102 (VVSLIFWALTLVVTVKYVLFV), 130–150 (LILGVGICGAALFFGDAVITP), 163–183 (IVAPNLTPFVVPAAVVILVTL), 194–214 (VAIVFGPIMALWFVALGASGL), 235–255 (FLTVSPAVAFVTVGAVFLAMT), 276–296 (WLWIVFPCLLLNYFGQAAFIL), 309–329 (MIPSFALWPMVLLATAATVIA), 366–386 (IYIPRVNLLLGLAVVILVLGF), 395–415 (AYGIAVTGNMLVTTVLLYIAM), 426–446 (ALPIILGFLVIDMLFFSANII), and 450–470 (EGGWASIGIATVLVLIMWTWV).

This sequence belongs to the HAK/KUP transporter (TC 2.A.72) family.

It is found in the cell inner membrane. The catalysed reaction is K(+)(in) + H(+)(in) = K(+)(out) + H(+)(out). In terms of biological role, transport of potassium into the cell. Likely operates as a K(+):H(+) symporter. In Brucella abortus (strain S19), this protein is Probable potassium transport system protein Kup.